The chain runs to 502 residues: D-erythritol 1-phosphate dehydrogenase (502 aa).

FAD is bound at residue 8–36; sequence DLFVIGGGINGAGVARDAAGRGLKVVLAE.

The protein belongs to the FAD-dependent glycerol-3-phosphate dehydrogenase family. FAD serves as cofactor.

It catalyses the reaction D-erythritol 1-phosphate + NADP(+) = D-erythrulose 1-phosphate + NADPH + H(+). It functions in the pathway carbohydrate metabolism; erythritol degradation. Its function is as follows. Catalyzes the oxydation of D-erythritol 1-phosphate to D-erythrulose 1-phosphate. This Brucella abortus (strain 2308) protein is D-erythritol 1-phosphate dehydrogenase.